The chain runs to 456 residues: Phosphoglucomutase/phosphomannomutase (456 aa).

Catalysis depends on S101, which acts as the Phosphoserine intermediate. Mg(2+)-binding residues include S101, D243, D245, and D247. Position 101 is a phosphoserine; by autocatalysis (S101).

Belongs to the phosphohexose mutase family. Homotetramer. Mg(2+) is required as a cofactor. Activated by phosphorylation.

It carries out the reaction alpha-D-glucose 1-phosphate = alpha-D-glucose 6-phosphate. It catalyses the reaction alpha-D-mannose 1-phosphate = D-mannose 6-phosphate. Catalyzes the interconversion of glucose 1-phosphate and glucose 6-phosphate, and the interconversion of mannose 1-phosphate and mannose 6-phosphate. Also displays low activity with deoxyribose 1-phosphate and glucosamine 1-phosphate. In Thermococcus kodakarensis (strain ATCC BAA-918 / JCM 12380 / KOD1) (Pyrococcus kodakaraensis (strain KOD1)), this protein is Phosphoglucomutase/phosphomannomutase.